Here is a 155-residue protein sequence, read N- to C-terminus: Large ribosomal subunit protein eL24 (155 aa).

Residues 94–129 show a composition bias toward basic and acidic residues; that stretch reads RSLKPEVRKAQRDEKKKADKEKKKADKAARKSEKAK. Residues 94-155 are disordered; sequence RSLKPEVRKA…AFQKVAATSR (62 aa).

It belongs to the eukaryotic ribosomal protein eL24 family.

In Kluyveromyces lactis (strain ATCC 8585 / CBS 2359 / DSM 70799 / NBRC 1267 / NRRL Y-1140 / WM37) (Yeast), this protein is Large ribosomal subunit protein eL24 (RPL24).